The sequence spans 156 residues: ATP synthase subunit b (156 aa).

Residues 11–31 (LIAFALFVWFCMKFVWPPIIN) traverse the membrane as a helical segment.

This sequence belongs to the ATPase B chain family. As to quaternary structure, F-type ATPases have 2 components, F(1) - the catalytic core - and F(0) - the membrane proton channel. F(1) has five subunits: alpha(3), beta(3), gamma(1), delta(1), epsilon(1). F(0) has three main subunits: a(1), b(2) and c(10-14). The alpha and beta chains form an alternating ring which encloses part of the gamma chain. F(1) is attached to F(0) by a central stalk formed by the gamma and epsilon chains, while a peripheral stalk is formed by the delta and b chains.

It localises to the cell inner membrane. F(1)F(0) ATP synthase produces ATP from ADP in the presence of a proton or sodium gradient. F-type ATPases consist of two structural domains, F(1) containing the extramembraneous catalytic core and F(0) containing the membrane proton channel, linked together by a central stalk and a peripheral stalk. During catalysis, ATP synthesis in the catalytic domain of F(1) is coupled via a rotary mechanism of the central stalk subunits to proton translocation. Functionally, component of the F(0) channel, it forms part of the peripheral stalk, linking F(1) to F(0). This is ATP synthase subunit b from Haemophilus influenzae (strain PittGG).